The chain runs to 144 residues: ATP synthase epsilon chain (144 aa).

It belongs to the ATPase epsilon chain family. In terms of assembly, F-type ATPases have 2 components, CF(1) - the catalytic core - and CF(0) - the membrane proton channel. CF(1) has five subunits: alpha(3), beta(3), gamma(1), delta(1), epsilon(1). CF(0) has three main subunits: a, b and c.

Its subcellular location is the cell inner membrane. Its function is as follows. Produces ATP from ADP in the presence of a proton gradient across the membrane. This is ATP synthase epsilon chain from Ectopseudomonas mendocina (strain ymp) (Pseudomonas mendocina).